We begin with the raw amino-acid sequence, 634 residues long: MSYDASAIRVLKGLEGVRHRPAMYIGGTGVEGYHHLFKEILDNAVDEALAGYATEILVRLNEDGSLTVEDNGRGIPVDLMPEEGKPAVEVIYTTLHSGGKFEQGAYKVSGGLHGVGASVVNALSEWTVVEVFREGKHHRIAFSRGEVTEPLRVVGEAPRGKTGTRVTFKPDPEIFGNLRFDPSKIRARLREVAYLVAGLKLVFQDRQHGKEEVFLDKGGVASFAKALAEGEDLLYEKPFLIRGTHGEVEVEVGFLHTQGYNAEILTYANMIPTRDGGTHLTAFKSAYSRALNQYAKKAGLNKEKGPQPTGDDLLEGLYAVVSVKLPNPQFEGQTKGKLLNPEAGTAVGQVVYERLLEILEENPRIAKAVYEKALRAAQAREAARKARELVRRQNPLESDELPGKLADCQTENPEEAELFIVEGDSAGGSAKQGRDRRFQAILPLRGKILNVEKAGLSKALKNAEVRAMVSAIGVGIGGDGEAHFDLEGLRYHKIIIMTDADVDGSHIRTLLLTFFYRYMRPLIERGHVYIAQPPLYRLQVGKKVEYLYSDEELQARLKELEGKHYEVQRFKGLGEMNPEQLWETTMNPEKRVLKRVELQDALEASELFEKLMGQEVAPRREFIEEHARYAELDI.

The segment at 1 to 220 (MSYDASAIRV…EEVFLDKGGV (220 aa)) is ATPase domain. The segment at 221–390 (ASFAKALAEG…EAARKARELV (170 aa)) is transducer domain. The Toprim domain occupies 416 to 534 (AELFIVEGDS…RGHVYIAQPP (119 aa)). Positions 422, 499, and 501 each coordinate Mg(2+).

This sequence belongs to the type II topoisomerase GyrB family. Heterotetramer, composed of two GyrA and two GyrB chains. Non-hydrolyzable ATP analogs induce dimerization, novobiocin also induces a small amount of dimerization. The two subunits form an intertwined dimer where the GyrB ATPase transducer helix of 1 subunit connects to the Toprim domain of the other GyrB subunit through a 10 residue linker. In the heterotetramer, GyrA contains the active site tyrosine that forms a covalent intermediate with the DNA, while GyrB binds cofactors and catalyzes ATP hydrolysis. Mg(2+) is required as a cofactor. The cofactor is Mn(2+). It depends on Ca(2+) as a cofactor.

It localises to the cytoplasm. The catalysed reaction is ATP-dependent breakage, passage and rejoining of double-stranded DNA.. Its function is as follows. A type II topoisomerase that negatively supercoils closed circular double-stranded (ds) DNA in an ATP-dependent manner. It probably also catalyzes the interconversion of other topological isomers of double-stranded DNA rings, including catenanes. Relaxes negatively supercoiled DNA in an ATP-independent manner. At comparable concentrations T.thermophilus gyrase does not introduce as many negative supercoils into DNA as the E.coli enzyme. Negative supercoiling favors strand separation, and DNA replication, transcription, recombination and repair, all of which involve strand separation. Type II topoisomerases break and join 2 DNA strands simultaneously in an ATP-dependent manner. The polypeptide is DNA gyrase subunit B (Thermus thermophilus (strain ATCC 27634 / DSM 579 / HB8)).